The following is a 471-amino-acid chain: MTTEAAVLDYKVADISLAEWGRKEIEIAEKEMPGLMATRKKYEGKKPLAGARIAGSLHMTIQTAVLIETLVELGADVRWASCNIFSTQDHAAAAIAAAGVPVFAWKGETLDEYWWCTRQILEFEGGLGPNLIVDDGGDATLMIHFGYKIENDPSMLDKTPGNAEEKALLQQLKAVFAEDNQRWHKVAAGMKGVSEETTTGVHRLYQMMEKGELLFPAINVNDSVTKSKFDNLYGCRESLADGIKRATDVMIAGKVVVVLGYGDVGKGCAHSMRSYGARVIVTEIDPICALQAAMEGFEVTTMEEAVKEGNIFVTATGNKDVITLDHIKQMRDEAIVCNIGHFDNEIQVDALNNFKGATRINIKPQVDKYVFENGNCIYLLAEGRLVNLGCATGHPSFVMSNSFTNQTLAQIELWQNDYKVGVYRLPKKLDEEVARLHLGQIGAKLTTLTKEQADYIGVPVEGPYKPEHYRY.

Substrate-binding residues include threonine 60, aspartate 135, and glutamate 196. 197-199 contacts NAD(+); that stretch reads TTT. Lysine 226 and aspartate 230 together coordinate substrate. Residues asparagine 231, 260–265, glutamate 283, asparagine 318, 339–341, and asparagine 387 contribute to the NAD(+) site; these read GYGDVG and IGH.

Belongs to the adenosylhomocysteinase family. Requires NAD(+) as cofactor.

Its subcellular location is the cytoplasm. The catalysed reaction is S-adenosyl-L-homocysteine + H2O = L-homocysteine + adenosine. It functions in the pathway amino-acid biosynthesis; L-homocysteine biosynthesis; L-homocysteine from S-adenosyl-L-homocysteine: step 1/1. Functionally, may play a key role in the regulation of the intracellular concentration of adenosylhomocysteine. The chain is Adenosylhomocysteinase from Chlorobaculum tepidum (strain ATCC 49652 / DSM 12025 / NBRC 103806 / TLS) (Chlorobium tepidum).